Reading from the N-terminus, the 425-residue chain is Histidine--tRNA ligase (425 aa).

It belongs to the class-II aminoacyl-tRNA synthetase family. In terms of assembly, homodimer.

Its subcellular location is the cytoplasm. The enzyme catalyses tRNA(His) + L-histidine + ATP = L-histidyl-tRNA(His) + AMP + diphosphate + H(+). The polypeptide is Histidine--tRNA ligase (Shewanella oneidensis (strain ATCC 700550 / JCM 31522 / CIP 106686 / LMG 19005 / NCIMB 14063 / MR-1)).